The primary structure comprises 197 residues: uncharacterized protein (197 aa).

A signal peptide spans 1–19 (MKLASLLVGSLMLAVPALA).

Its subcellular location is the secreted. This is an uncharacterized protein from Arthroderma benhamiae (strain ATCC MYA-4681 / CBS 112371) (Trichophyton mentagrophytes).